The primary structure comprises 363 residues: GDSL esterase/lipase At3g14220 (363 aa).

The N-terminal stretch at 1-28 (MAKNRNLVFFLGVLASFTLSSFPVTVSG) is a signal peptide. S39 serves as the catalytic Nucleophile. Catalysis depends on residues D318 and H321.

Belongs to the 'GDSL' lipolytic enzyme family.

It is found in the secreted. The protein is GDSL esterase/lipase At3g14220 of Arabidopsis thaliana (Mouse-ear cress).